The primary structure comprises 566 residues: Arginine--tRNA ligase (566 aa).

Positions 124–134 (ANPNGPLHIGH) match the 'HIGH' region motif.

This sequence belongs to the class-I aminoacyl-tRNA synthetase family.

The protein localises to the cytoplasm. The catalysed reaction is tRNA(Arg) + L-arginine + ATP = L-arginyl-tRNA(Arg) + AMP + diphosphate. In Methanocaldococcus jannaschii (strain ATCC 43067 / DSM 2661 / JAL-1 / JCM 10045 / NBRC 100440) (Methanococcus jannaschii), this protein is Arginine--tRNA ligase (argS).